We begin with the raw amino-acid sequence, 290 residues long: 33 kDa chaperonin (290 aa).

2 cysteine pairs are disulfide-bonded: Cys235–Cys237 and Cys268–Cys271.

The protein belongs to the HSP33 family. Under oxidizing conditions two disulfide bonds are formed involving the reactive cysteines. Under reducing conditions zinc is bound to the reactive cysteines and the protein is inactive.

It is found in the cytoplasm. In terms of biological role, redox regulated molecular chaperone. Protects both thermally unfolding and oxidatively damaged proteins from irreversible aggregation. Plays an important role in the bacterial defense system toward oxidative stress. In Streptococcus pyogenes serotype M12 (strain MGAS2096), this protein is 33 kDa chaperonin.